Consider the following 88-residue polypeptide: Large ribosomal subunit protein bL27 (88 aa).

Positions 1 to 25 (MAHKKAGGSSRNGRDSPGQRRGIKR) are disordered.

The protein belongs to the bacterial ribosomal protein bL27 family.

This chain is Large ribosomal subunit protein bL27 (rpmA), found in Lawsonia intracellularis.